The chain runs to 221 residues: Cysteine protease inhibitor 8 (221 aa).

Positions Ile1–Thr26 are cleaved as a signal peptide. Residues Ser27–Asn42 constitute a propeptide that is removed on maturation. The Vacuolar targeting signal motif lies at Asn29 to Pro34. 2 cysteine pairs are disulfide-bonded: Cys84/Cys136 and Cys184/Cys190.

This sequence belongs to the protease inhibitor I3 (leguminous Kunitz-type inhibitor) family.

It localises to the vacuole. In terms of biological role, inhibitor of cysteine proteases. May protect the plant by inhibiting proteases of invading organisms. The chain is Cysteine protease inhibitor 8 from Solanum tuberosum (Potato).